Consider the following 155-residue polypeptide: 3-hydroxyacyl-[acyl-carrier-protein] dehydratase FabZ (155 aa).

The active site involves histidine 54.

It belongs to the thioester dehydratase family. FabZ subfamily.

The protein localises to the cytoplasm. The catalysed reaction is a (3R)-hydroxyacyl-[ACP] = a (2E)-enoyl-[ACP] + H2O. Functionally, involved in unsaturated fatty acids biosynthesis. Catalyzes the dehydration of short chain beta-hydroxyacyl-ACPs and long chain saturated and unsaturated beta-hydroxyacyl-ACPs. In Burkholderia mallei (strain NCTC 10247), this protein is 3-hydroxyacyl-[acyl-carrier-protein] dehydratase FabZ.